The primary structure comprises 494 residues: Putative bifunctional dihydrofolate reductase-thymidylate synthase (494 aa).

The region spanning 1 to 167 is the DHFR domain; it reads MGIGKDGTLP…IKHSFISFVR (167 aa). 2 to 8 lines the NADP(+) pocket; the sequence is GIGKDGT. Substrate is bound at residue aspartate 16. NADP(+) contacts are provided by residues 40 to 42 and 61 to 64; these read RKT and LTRS. Isoleucine 103 contributes to the substrate binding site. Position 104–111 (104–111) interacts with NADP(+); it reads GGGEILRQ. Threonine 124 serves as a coordination point for substrate. Residues 170 to 494 form a thymidylate synthase region; the sequence is KSIAEANDSS…HHKIEMKMAV (325 aa). Arginine 231 is a binding site for dUMP. Cysteine 376 is an active-site residue. DUMP contacts are provided by residues histidine 377, 395 to 399, asparagine 407, and 437 to 439; these read QRSAD and HVY.

This sequence in the N-terminal section; belongs to the dihydrofolate reductase family. The protein in the C-terminal section; belongs to the thymidylate synthase family.

The enzyme catalyses (6S)-5,6,7,8-tetrahydrofolate + NADP(+) = 7,8-dihydrofolate + NADPH + H(+). The catalysed reaction is dUMP + (6R)-5,10-methylene-5,6,7,8-tetrahydrofolate = 7,8-dihydrofolate + dTMP. It functions in the pathway cofactor biosynthesis; tetrahydrofolate biosynthesis; 5,6,7,8-tetrahydrofolate from 7,8-dihydrofolate: step 1/1. Its function is as follows. Bifunctional enzyme. Involved in de novo dTMP biosynthesis. Key enzyme in folate metabolism. Can play two different roles depending on the source of dihydrofolate: de novo synthesis of tetrahydrofolate or recycling of the dihydrofolate released as one of the end products of the TS catalyzed reaction. Catalyzes an essential reaction for de novo glycine and purine synthesis, DNA precursor synthesis, and for the conversion of dUMP to dTMP. In Oryza sativa subsp. japonica (Rice), this protein is Putative bifunctional dihydrofolate reductase-thymidylate synthase.